Reading from the N-terminus, the 1735-residue chain is Glutamine and serine-rich protein 1 (1735 aa).

M1 carries the N-acetylmethionine modification. Positions 267–297 (AIPSSGYPPSTTKIKSCSTEQPLTSTKTPKP) are enriched in polar residues. 4 disordered regions span residues 267-301 (AIPS…QSII), 414-440 (TRDL…VSQT), 479-518 (SRAQ…FLPA), and 533-561 (LQNN…SKQE). Residues 417 to 440 (LSSVSQSQSYSSGHSQGLSPVSQT) are compositionally biased toward low complexity. Phosphoserine occurs at positions 586, 615, and 886. Position 949 is a phosphothreonine (T949). The disordered stretch occupies residues 964-1033 (GPSHEVQEQS…EFTLGGDDSG (70 aa)). Over residues 971–985 (EQSSGPFKKQSATNL) the composition is skewed to polar residues. S987 carries the post-translational modification Phosphoserine. Polar residues predominate over residues 997-1024 (STLNNNRNQEFVSSSRSISGENATSESE). Residues K1058 and K1083 each participate in a glycyl lysine isopeptide (Lys-Gly) (interchain with G-Cter in SUMO2) cross-link. 2 disordered regions span residues 1073–1132 (KKRA…EKMR) and 1178–1217 (RPGT…DKVD). Basic and acidic residues predominate over residues 1120–1132 (SCHDGYQHQEKMR). A phosphoserine mark is found at S1211, S1230, S1231, and S1239. The disordered stretch occupies residues 1256-1286 (TSDKKKKTEALQVATTSPTANTTGTATTSST). Residues 1269-1286 (ATTSPTANTTGTATTSST) show a composition bias toward low complexity. T1341 carries the post-translational modification Phosphothreonine. The residue at position 1348 (S1348) is a Phosphoserine. The interval 1441–1532 (VCSKKPRNKP…SSDDEEFEPP (92 aa)) is disordered. The segment covering 1449–1478 (KPSQTIRTVQAKPSSSSKTSDPLASKTTTT) has biased composition (polar residues). Over residues 1492–1508 (VKAEPPPKKRKKWKEEF) the composition is skewed to basic and acidic residues.

In terms of assembly, interacts with TET1.

It is found in the chromosome. Plays an essential role in the protection and maintenance of transcriptional and developmental programs. Protects many bivalent promoters and poised enhancers from hypermethylation, showing a marked preference for these regulatory elements over other types of promoters or enhancers. Mechanistically, cooperates with TET1 and binds to DNA in a common complex to inhibit the binding of DNMT3A/3B and therefore de novo methylation. In Homo sapiens (Human), this protein is Glutamine and serine-rich protein 1 (QSER1).